The following is a 426-amino-acid chain: Dihydroorotase (426 aa).

Positions 59 and 61 each coordinate Zn(2+). Substrate is bound by residues 61–63 (HLR) and N93. Zn(2+) is bound by residues D151, H178, and H232. Residue N279 participates in substrate binding. Residue D306 participates in Zn(2+) binding. D306 is a catalytic residue. Residues H310 and 324–325 (FG) contribute to the substrate site.

It belongs to the metallo-dependent hydrolases superfamily. DHOase family. Class I DHOase subfamily. It depends on Zn(2+) as a cofactor.

It carries out the reaction (S)-dihydroorotate + H2O = N-carbamoyl-L-aspartate + H(+). It functions in the pathway pyrimidine metabolism; UMP biosynthesis via de novo pathway; (S)-dihydroorotate from bicarbonate: step 3/3. In terms of biological role, catalyzes the reversible cyclization of carbamoyl aspartate to dihydroorotate. This Brevibacillus brevis (strain 47 / JCM 6285 / NBRC 100599) protein is Dihydroorotase.